Consider the following 580-residue polypeptide: Glutathione hydrolase proenzyme (580 aa).

The signal sequence occupies residues 1–25; sequence MIKPTFLRRVAIAALLSGSCFSAAA. Arg114 lines the L-glutamate pocket. Catalysis depends on Thr391, which acts as the Nucleophile. L-glutamate is bound by residues Thr409, Asn411, Gln430, Asp433, 462–463, and 483–484; these read SS and GG. Residues 561–580 form a disordered region; that stretch reads DGELYGASDPRSVDDLTAGY.

Belongs to the gamma-glutamyltransferase family. This enzyme consists of two polypeptide chains, which are synthesized in precursor form from a single polypeptide. Cleaved by autocatalysis into a large and a small subunit.

The protein localises to the periplasm. It carries out the reaction an N-terminal (5-L-glutamyl)-[peptide] + an alpha-amino acid = 5-L-glutamyl amino acid + an N-terminal L-alpha-aminoacyl-[peptide]. It catalyses the reaction glutathione + H2O = L-cysteinylglycine + L-glutamate. The catalysed reaction is an S-substituted glutathione + H2O = an S-substituted L-cysteinylglycine + L-glutamate. It functions in the pathway sulfur metabolism; glutathione metabolism. Its activity is regulated as follows. Transferase and hydrolase activities are inhibited by L-Ala and L-Gln, and also by GGT affinity labeling reagents such as azaserine and 6-diazo-5-oxo-nor-leucine. In terms of biological role, cleaves the gamma-glutamyl bond of periplasmic glutathione (gamma-Glu-Cys-Gly), glutathione conjugates, and other gamma-glutamyl compounds. The metabolism of glutathione releases free glutamate and the dipeptide cysteinyl-glycine, which is hydrolyzed to cysteine and glycine by dipeptidases; it may function in amino acid uptake/salvage, or possibly in peptidoglycan linkage. Catalyzes the hydrolysis and transpeptidation of many gamma-glutamyl compounds (including some D-gamma-glutamyl substrates), with a preference for basic and aromatic amino acids as acceptors. The KM values for gamma-glutamyl acceptors are so high that it has been proposed transpeptidation is not the physiological role in E.coli. The protein is Glutathione hydrolase proenzyme (ggt) of Escherichia coli (strain K12).